Reading from the N-terminus, the 370-residue chain is GTPase Obg (370 aa).

An Obg domain is found at 1–159 (MKFIDEARIE…RMLRLELKVL (159 aa)). One can recognise an OBG-type G domain in the interval 160-334 (ADVGLLGMPN…LCYAIYDYLA (175 aa)). GTP-binding positions include 166-173 (GMPNAGKS), 191-195 (FTTLA), 213-216 (DIPG), 284-287 (NKLD), and 315-317 (SAL). 2 residues coordinate Mg(2+): S173 and T193. Residues 344–370 (EEEDLATDVRFRDAPPADGGATPGDDA) are disordered.

The protein belongs to the TRAFAC class OBG-HflX-like GTPase superfamily. OBG GTPase family. Monomer. Mg(2+) is required as a cofactor.

It localises to the cytoplasm. In terms of biological role, an essential GTPase which binds GTP, GDP and possibly (p)ppGpp with moderate affinity, with high nucleotide exchange rates and a fairly low GTP hydrolysis rate. Plays a role in control of the cell cycle, stress response, ribosome biogenesis and in those bacteria that undergo differentiation, in morphogenesis control. This chain is GTPase Obg, found in Burkholderia ambifaria (strain ATCC BAA-244 / DSM 16087 / CCUG 44356 / LMG 19182 / AMMD) (Burkholderia cepacia (strain AMMD)).